The following is a 464-amino-acid chain: A-type ATP synthase subunit B (464 aa).

Belongs to the ATPase alpha/beta chains family. Has multiple subunits with at least A(3), B(3), C, D, E, F, H, I and proteolipid K(x).

Its subcellular location is the cell membrane. Functionally, component of the A-type ATP synthase that produces ATP from ADP in the presence of a proton gradient across the membrane. The B chain is a regulatory subunit. This Methanococcus aeolicus (strain ATCC BAA-1280 / DSM 17508 / OCM 812 / Nankai-3) protein is A-type ATP synthase subunit B.